Here is a 393-residue protein sequence, read N- to C-terminus: NAD(P)H-quinone oxidoreductase subunit H, chloroplastic (393 aa).

Belongs to the complex I 49 kDa subunit family. In terms of assembly, NDH is composed of at least 16 different subunits, 5 of which are encoded in the nucleus.

The protein resides in the plastid. It localises to the chloroplast thylakoid membrane. The enzyme catalyses a plastoquinone + NADH + (n+1) H(+)(in) = a plastoquinol + NAD(+) + n H(+)(out). It catalyses the reaction a plastoquinone + NADPH + (n+1) H(+)(in) = a plastoquinol + NADP(+) + n H(+)(out). In terms of biological role, NDH shuttles electrons from NAD(P)H:plastoquinone, via FMN and iron-sulfur (Fe-S) centers, to quinones in the photosynthetic chain and possibly in a chloroplast respiratory chain. The immediate electron acceptor for the enzyme in this species is believed to be plastoquinone. Couples the redox reaction to proton translocation, and thus conserves the redox energy in a proton gradient. In Daucus carota (Wild carrot), this protein is NAD(P)H-quinone oxidoreductase subunit H, chloroplastic.